Reading from the N-terminus, the 369-residue chain is Anhydro-N-acetylmuramic acid kinase (369 aa).

Residue 12-19 coordinates ATP; sequence GTSMDGVD.

This sequence belongs to the anhydro-N-acetylmuramic acid kinase family.

The enzyme catalyses 1,6-anhydro-N-acetyl-beta-muramate + ATP + H2O = N-acetyl-D-muramate 6-phosphate + ADP + H(+). Its pathway is amino-sugar metabolism; 1,6-anhydro-N-acetylmuramate degradation. It functions in the pathway cell wall biogenesis; peptidoglycan recycling. In terms of biological role, catalyzes the specific phosphorylation of 1,6-anhydro-N-acetylmuramic acid (anhMurNAc) with the simultaneous cleavage of the 1,6-anhydro ring, generating MurNAc-6-P. Is required for the utilization of anhMurNAc either imported from the medium or derived from its own cell wall murein, and thus plays a role in cell wall recycling. This Shewanella putrefaciens (strain CN-32 / ATCC BAA-453) protein is Anhydro-N-acetylmuramic acid kinase.